Here is a 492-residue protein sequence, read N- to C-terminus: Glutamyl-tRNA(Gln) amidotransferase subunit A (492 aa).

Residues lysine 78 and serine 158 each act as charge relay system in the active site. Residue serine 182 is the Acyl-ester intermediate of the active site.

The protein belongs to the amidase family. GatA subfamily. As to quaternary structure, heterotrimer of A, B and C subunits.

The enzyme catalyses L-glutamyl-tRNA(Gln) + L-glutamine + ATP + H2O = L-glutaminyl-tRNA(Gln) + L-glutamate + ADP + phosphate + H(+). In terms of biological role, allows the formation of correctly charged Gln-tRNA(Gln) through the transamidation of misacylated Glu-tRNA(Gln) in organisms which lack glutaminyl-tRNA synthetase. The reaction takes place in the presence of glutamine and ATP through an activated gamma-phospho-Glu-tRNA(Gln). This is Glutamyl-tRNA(Gln) amidotransferase subunit A from Orientia tsutsugamushi (strain Boryong) (Rickettsia tsutsugamushi).